Reading from the N-terminus, the 728-residue chain is MDKTQSSQGKCPVMHGANSAVASNNMDWWPKALNLDILHQHDKKTDPMDPKFNYREAFNSLDLAAVKRDLNALMTDSQDWWPADWGHYGGLMIRMAWHSAGTYRVADGRGGAGTGNQRFAPLNSWPDNANLDKARRLLWPIKKKYGNKLSWADLMILAGNVAYESMGLKTYGFAGGREDIWHPEKDIYWGSEKQWLAPTENPNSRYSGERDLENPLAAVMMGLIYVNPEGVDGKPDPLRTAQDVRVTFARMAMNDEETVALTAGGHTVGKCHGNGKAQDLGPEPEGEDLEAQGLGWLNKKGPGIGANAVTSGLEGAWTTYPTQWDNGYFHLLLNYDWELKKSPAGASQWEPINIKEEDKVVSVGDPNRKFNPIMTDADMAMKMDPEYRKISEKFYQDPAYFSEVFARAWFKLTHRDLGPKSRYLGPEVPNEDLLWQDPIPSVDYRLDASEIVDLKAKLLASGLSVSELVATAWDSARTFRGSDFRGGANGARIRLAPQKDWQANEPERLQKVLKVLTELQASLSKKVSIADLIVLGGAAAIEKAAHEAGVKVTVPFIPGRGDATQEMTDVESFAVLEPLHDAYRNWQKKDYVVQPEEMMLDRTQLMGLTAHEMTVLVGGMRVLGTNYGGTRHGVFTDKVGVLTNDFFVNLTDMAYNWKPAGSNLYQIVERKTGAVKWTASRVDLVFGSNSILRAYAEMYAQDDAKEKFVHDFVAAWTKVMNADRFDLA.

Residues 1-22 (MDKTQSSQGKCPVMHGANSAVA) form the signal peptide. The segment at residues 97–225 (WHSAGTYRVA…LAAVMMGLIY (129 aa)) is a cross-link (tryptophyl-tyrosyl-methioninium (Trp-Tyr) (with M-251)). His98 (proton acceptor) is an active-site residue. A cross-link (tryptophyl-tyrosyl-methioninium (Tyr-Met) (with W-97)) is located at residues 225–251 (YVNPEGVDGKPDPLRTAQDVRVTFARM). His266 serves as a coordination point for heme b.

It belongs to the peroxidase family. Peroxidase/catalase subfamily. In terms of assembly, homodimer or homotetramer. Heme b is required as a cofactor. Formation of the three residue Trp-Tyr-Met cross-link is important for the catalase, but not the peroxidase activity of the enzyme.

It catalyses the reaction H2O2 + AH2 = A + 2 H2O. It carries out the reaction 2 H2O2 = O2 + 2 H2O. Bifunctional enzyme with both catalase and broad-spectrum peroxidase activity. This Shewanella sp. (strain MR-4) protein is Catalase-peroxidase 1.